Reading from the N-terminus, the 226-residue chain is Insulin-like growth factor-binding protein 6 (226 aa).

A signal peptide spans 1 to 25; sequence MTWDGLPTQPLLMLLMLLFAAGSES. Positions 26–99 constitute an IGFBP N-terminal domain; that stretch reads ALAGCPGCGP…LIGQGRCQRA (74 aa). Disulfide bonds link cysteine 30-cysteine 33, cysteine 49-cysteine 55, cysteine 63-cysteine 76, and cysteine 70-cysteine 96. A disordered region spans residues 92-148; that stretch reads GQGRCQRARGPSEETTKESKPHGGASRPRDRDRQKNPRTSAAPIRPSPVQDGEMGPC. Basic and acidic residues predominate over residues 101–126; it reads GPSEETTKESKPHGGASRPRDRDRQK. The Thyroglobulin type-1 domain maps to 145–220; that stretch reads MGPCRRHLDS…SPDGQGSSQC (76 aa). 3 disulfide bridges follow: cysteine 148/cysteine 176, cysteine 187/cysteine 198, and cysteine 200/cysteine 220. The interval 205–226 is disordered; sequence GQPLPVSPDGQGSSQCSARSSG. Over residues 214–226 the composition is skewed to polar residues; sequence GQGSSQCSARSSG.

As to quaternary structure, interacts (via C-terminal domain) with PHB2. In terms of processing, O-glycosylated.

It localises to the secreted. Its function is as follows. IGF-binding proteins prolong the half-life of the IGFs and have been shown to either inhibit or stimulate the growth promoting effects of the IGFs on cell culture. They alter the interaction of IGFs with their cell surface receptors. Activates the MAPK signaling pathway and induces cell migration. The polypeptide is Insulin-like growth factor-binding protein 6 (Igfbp6) (Rattus norvegicus (Rat)).